A 787-amino-acid chain; its full sequence is Protein translocase subunit SecA (787 aa).

ATP-binding positions include Gln85, Gly103–Thr107, and Asp492.

The protein belongs to the SecA family. As to quaternary structure, monomer and homodimer. Part of the essential Sec protein translocation apparatus which comprises SecA, SecYEG and auxiliary proteins SecDF. Other proteins may also be involved.

Its subcellular location is the cell membrane. The protein localises to the cytoplasm. The enzyme catalyses ATP + H2O + cellular proteinSide 1 = ADP + phosphate + cellular proteinSide 2.. In terms of biological role, part of the Sec protein translocase complex. Interacts with the SecYEG preprotein conducting channel. Has a central role in coupling the hydrolysis of ATP to the transfer of proteins into and across the cell membrane, serving as an ATP-driven molecular motor driving the stepwise translocation of polypeptide chains across the membrane. The chain is Protein translocase subunit SecA from Lacticaseibacillus casei (strain BL23) (Lactobacillus casei).